Reading from the N-terminus, the 568-residue chain is Lariat debranching enzyme (568 aa).

The a divalent metal cation site is built by Cys8, His10, Asp39, and Asn84. Residues 124 to 154 are lariat recognition loop; it reads SGIFKSHDFKKGHFEFPPYNPETLRSVYHIR. A divalent metal cation contacts are provided by His174, His226, and His228. The segment at 388-568 is disordered; sequence IYGERGGKGA…TAVEDEESDS (181 aa). Residues 417-428 are compositionally biased toward polar residues; it reads PSDTSGLSSSYN. Over residues 432–444 the composition is skewed to acidic residues; sequence ITIEDEWEEEEDG. Positions 467–480 are enriched in basic and acidic residues; that stretch reads DSDRDSSPQRETAK. Thr478 carries the phosphothreonine modification. Residues 534–549 are compositionally biased toward low complexity; it reads GETTQSSAGQTGGTPQ. Residue Ser568 is modified to Phosphoserine.

It belongs to the lariat debranching enzyme family. Fe(2+) is required as a cofactor. Zn(2+) serves as cofactor. The cofactor is Mn(2+).

It localises to the nucleus. Active in presence of diverse metals including Fe(2+), Zn(2+), Mn(2+). Also activated by Ca(2+). Binds two metal cations in two adjacent alpha and beta metal-binding pockets. Functionally, cleaves the 2'-5' phosphodiester linkage at the branch point of excised lariat intron RNA and converts them into linear molecules that can be subsequently degraded, thereby facilitating ribonucleotide turnover. Linked to its role in pre-mRNA processing mechanism, may also participate in retrovirus replication and have an antiviral cell-intrinsic defense function. This chain is Lariat debranching enzyme (dbr1), found in Danio rerio (Zebrafish).